The following is a 111-amino-acid chain: Large ribosomal subunit protein uL22 (111 aa).

The protein belongs to the universal ribosomal protein uL22 family. As to quaternary structure, part of the 50S ribosomal subunit.

Functionally, this protein binds specifically to 23S rRNA; its binding is stimulated by other ribosomal proteins, e.g. L4, L17, and L20. It is important during the early stages of 50S assembly. It makes multiple contacts with different domains of the 23S rRNA in the assembled 50S subunit and ribosome. Its function is as follows. The globular domain of the protein is located near the polypeptide exit tunnel on the outside of the subunit, while an extended beta-hairpin is found that lines the wall of the exit tunnel in the center of the 70S ribosome. The sequence is that of Large ribosomal subunit protein uL22 from Xanthomonas oryzae pv. oryzae (strain PXO99A).